The chain runs to 262 residues: 14-3-3-like protein B (262 aa).

Belongs to the 14-3-3 family.

This Hordeum vulgare (Barley) protein is 14-3-3-like protein B.